A 477-amino-acid polypeptide reads, in one-letter code: Cysteine--tRNA ligase (477 aa).

Zn(2+) is bound at residue cysteine 34. A 'HIGH' region motif is present at residues 36–46 (PTVYDFAHIGN). Cysteine 235, histidine 260, and glutamate 264 together coordinate Zn(2+). The 'KMSKS' region signature appears at 293-297 (KMSKS). Lysine 296 is an ATP binding site.

The protein belongs to the class-I aminoacyl-tRNA synthetase family. Monomer. Requires Zn(2+) as cofactor.

It localises to the cytoplasm. The enzyme catalyses tRNA(Cys) + L-cysteine + ATP = L-cysteinyl-tRNA(Cys) + AMP + diphosphate. The polypeptide is Cysteine--tRNA ligase (Mesorhizobium japonicum (strain LMG 29417 / CECT 9101 / MAFF 303099) (Mesorhizobium loti (strain MAFF 303099))).